The primary structure comprises 1098 residues: Beta-alanine-activating enzyme (1098 aa).

Residues 198-206 (TSGTTGIPK), D428, R442, and K527 each bind ATP. A Carrier domain is found at 553–630 (EDLWEKLQYL…EIYNHILQTV (78 aa)). S589 is modified (O-(pantetheine 4'-phosphoryl)serine). S649 and S724 each carry phosphoserine.

Belongs to the ATP-dependent AMP-binding enzyme family. Ubiquitously expressed in adult tissues.

Covalently binds beta-alanine in an ATP-dependent manner to form a thioester bond with its phosphopantetheine group and transfers it to an, as yet, unknown acceptor. May be required for a post-translational protein modification or for post-transcriptional modification of an RNA. The chain is Beta-alanine-activating enzyme (AASDH) from Homo sapiens (Human).